The primary structure comprises 273 residues: Shikimate kinase (273 aa).

85–95 lines the ATP pocket; it reads PVGKGLKSSSA.

The protein belongs to the GHMP kinase family. Archaeal shikimate kinase subfamily.

Its subcellular location is the cytoplasm. The catalysed reaction is shikimate + ATP = 3-phosphoshikimate + ADP + H(+). The protein operates within metabolic intermediate biosynthesis; chorismate biosynthesis; chorismate from D-erythrose 4-phosphate and phosphoenolpyruvate: step 5/7. The polypeptide is Shikimate kinase (Pyrococcus furiosus (strain ATCC 43587 / DSM 3638 / JCM 8422 / Vc1)).